The following is a 469-amino-acid chain: Ribulose bisphosphate carboxylase large chain (469 aa).

A propeptide spanning residues 1-2 (MS) is cleaved from the precursor. An N-acetylproline modification is found at Pro-3. Lys-14 bears the N6,N6,N6-trimethyllysine mark. Residues Asn-123 and Thr-173 each coordinate substrate. The active-site Proton acceptor is Lys-175. Lys-177 lines the substrate pocket. Lys-201, Asp-203, and Glu-204 together coordinate Mg(2+). Position 201 is an N6-carboxylysine (Lys-201). The Proton acceptor role is filled by His-294. Substrate-binding residues include Arg-295, His-327, and Ser-379.

This sequence belongs to the RuBisCO large chain family. Type I subfamily. As to quaternary structure, heterohexadecamer of 8 large chains and 8 small chains; disulfide-linked. The disulfide link is formed within the large subunit homodimers. Mg(2+) is required as a cofactor. In terms of processing, the disulfide bond which can form in the large chain dimeric partners within the hexadecamer appears to be associated with oxidative stress and protein turnover.

Its subcellular location is the plastid. The protein resides in the chloroplast. It catalyses the reaction 2 (2R)-3-phosphoglycerate + 2 H(+) = D-ribulose 1,5-bisphosphate + CO2 + H2O. The catalysed reaction is D-ribulose 1,5-bisphosphate + O2 = 2-phosphoglycolate + (2R)-3-phosphoglycerate + 2 H(+). In terms of biological role, ruBisCO catalyzes two reactions: the carboxylation of D-ribulose 1,5-bisphosphate, the primary event in carbon dioxide fixation, as well as the oxidative fragmentation of the pentose substrate in the photorespiration process. Both reactions occur simultaneously and in competition at the same active site. In Brexia madagascariensis, this protein is Ribulose bisphosphate carboxylase large chain.